The chain runs to 274 residues: Penicillin-insensitive murein endopeptidase (274 aa).

The signal sequence occupies residues 1-19 (MKNTVIALLALLASAGSLA). 3 disulfide bridges follow: Cys44–Cys265, Cys187–Cys235, and Cys216–Cys223. Zn(2+) is bound by residues His110, His113, Asp120, Asp147, His150, and His211. The segment at 224-263 (EDQAPPPPGDGCGAELQSWFEPPKPGSTPPVKKTPPPLPP) is disordered. A compositionally biased stretch (pro residues) spans 245–263 (PPKPGSTPPVKKTPPPLPP).

It belongs to the peptidase M74 family. As to quaternary structure, dimer. Zn(2+) is required as a cofactor.

Its subcellular location is the periplasm. Functionally, murein endopeptidase that cleaves the D-alanyl-meso-2,6-diamino-pimelyl amide bond that connects peptidoglycan strands. Likely plays a role in the removal of murein from the sacculus. This is Penicillin-insensitive murein endopeptidase from Klebsiella pneumoniae subsp. pneumoniae (strain ATCC 700721 / MGH 78578).